The primary structure comprises 671 residues: DNA ligase (671 aa).

NAD(+)-binding positions include 36-40, 85-86, and glutamate 115; these read DHVYD and SM. The active-site N6-AMP-lysine intermediate is the lysine 117. The NAD(+) site is built by arginine 138, glutamate 172, lysine 287, and lysine 311. The Zn(2+) site is built by cysteine 405, cysteine 408, cysteine 423, and cysteine 428. A BRCT domain is found at 588–671; sequence AADNFFKGKT…SKIEEKDTEK (84 aa).

Belongs to the NAD-dependent DNA ligase family. LigA subfamily. The cofactor is Mg(2+). Mn(2+) serves as cofactor.

It catalyses the reaction NAD(+) + (deoxyribonucleotide)n-3'-hydroxyl + 5'-phospho-(deoxyribonucleotide)m = (deoxyribonucleotide)n+m + AMP + beta-nicotinamide D-nucleotide.. Functionally, DNA ligase that catalyzes the formation of phosphodiester linkages between 5'-phosphoryl and 3'-hydroxyl groups in double-stranded DNA using NAD as a coenzyme and as the energy source for the reaction. It is essential for DNA replication and repair of damaged DNA. This Lactobacillus delbrueckii subsp. bulgaricus (strain ATCC 11842 / DSM 20081 / BCRC 10696 / JCM 1002 / NBRC 13953 / NCIMB 11778 / NCTC 12712 / WDCM 00102 / Lb 14) protein is DNA ligase.